A 552-amino-acid polypeptide reads, in one-letter code: Hyaluronan synthase 2 (552 aa).

Over Met1–Arg11 the chain is Cytoplasmic. The chain crosses the membrane as a helical span at residues Ile12–Val32. At Gly33 to Ser45 the chain is on the extracellular side. A helical transmembrane segment spans residues Phe46–Leu66. The Cytoplasmic portion of the chain corresponds to Glu67–Leu374. Thr110 is subject to Phosphothreonine. Lys190 is covalently cross-linked (Glycyl lysine isopeptide (Lys-Gly) (interchain with G-Cter in ubiquitin)). Ser221 carries an O-linked (GlcNAc) serine glycan. A Phosphothreonine modification is found at Thr328. A helical transmembrane segment spans residues Trp375 to Ile395. At Gln396–Lys402 the chain is on the extracellular side. Residues Ile403–Phe423 traverse the membrane as a helical segment. The Cytoplasmic portion of the chain corresponds to Ala424 to Gly429. The helical transmembrane segment at Asn430–Ala450 threads the bilayer. Residues Lys451 to Phe475 lie on the Extracellular side of the membrane. A helical transmembrane segment spans residues Ile476 to Ile496. Topologically, residues Tyr497–Thr510 are cytoplasmic. Residues Val511–Val531 traverse the membrane as a helical segment. Residues Val532–Val552 are Extracellular-facing.

Belongs to the NodC/HAS family. As to quaternary structure, homodimer; dimerization promotes enzymatic activity. Forms heterodimer with HAS3. Forms heterodimer with HAS1. Mg(2+) is required as a cofactor. Post-translationally, phosphorylation at Thr-328 is essential for hyaluronan synthase activity. Phosphorylation at Thr-110 is required for transport from ER to Golgi. O-GlcNAcylation at Ser-221 increases the stability of HAS2 and plasma membrane localization. In terms of processing, ubiquitination at Lys-190; this ubiquitination is essential for hyaluronan synthase activity and homo- or hetero-oligomerization. Can also be poly-ubiquitinated. Deubiquitinated by USP17 and USP4. USP17 efficiently removes 'Lys-63'- and 'Lys-48'-linked polyubiquitin chains, whereas USP4 preferentially removes monoubiquitination and, partially, both 'Lys-63'- and 'Lys-48'-linked polyubiquitin chain. Expressed in fibroblasts.

It localises to the cell membrane. It is found in the endoplasmic reticulum membrane. The protein localises to the vesicle. The protein resides in the golgi apparatus membrane. Its subcellular location is the lysosome. It carries out the reaction [hyaluronan](n) + UDP-N-acetyl-alpha-D-glucosamine = N-acetyl-beta-D-glucosaminyl-(1-&gt;4)-[hyaluronan](n) + UDP + H(+). It catalyses the reaction N-acetyl-beta-D-glucosaminyl-(1-&gt;4)-[hyaluronan](n) + UDP-alpha-D-glucuronate = [hyaluronan](n+1) + UDP + H(+). It functions in the pathway glycan biosynthesis; hyaluronan biosynthesis. With respect to regulation, regulated by several post-translational modifications such as ubiquitination/deubiquitination, phosphorylation and O-GlcNAcylation. The enzymatic activity depends on the availability of UDP-GlcUA and UDP-GlcNAc. Catalyzes the addition of GlcNAc or GlcUA monosaccharides to the nascent hyaluronan polymer. Therefore, it is essential to hyaluronan synthesis a major component of most extracellular matrices that has a structural role in tissues architectures and regulates cell adhesion, migration and differentiation. This is one of three isoenzymes responsible for cellular hyaluronan synthesis and it is particularly responsible for the synthesis of high molecular mass hyaluronan. The sequence is that of Hyaluronan synthase 2 from Homo sapiens (Human).